Here is a 403-residue protein sequence, read N- to C-terminus: Probable eukaryotic initiation factor 4A (403 aa).

The segment at 1–29 (MSQQDRVAPQDQDSFLDDQPGVRPIPSFD) is disordered. The short motif at 26–54 (PSFDDMPLHQNLLRGIYSYGFEKPSSIQQ) is the Q motif element. Residues 57–230 (IAPFTRGGDI…KKFMRDPVRI (174 aa)) form the Helicase ATP-binding domain. 70–77 (AQSGTGKT) lines the ATP pocket. The DEAD box signature appears at 178–181 (DEAD). In terms of domain architecture, Helicase C-terminal spans 241–401 (GIKQFFIAVE…ELPVDFAAYL (161 aa)).

Belongs to the DEAD box helicase family. eIF4A subfamily. As to quaternary structure, eIF4F is a multi-subunit complex, the composition of which varies with external and internal environmental conditions. It is composed of at least EIF4A, EIF4E and EIF4G.

It catalyses the reaction ATP + H2O = ADP + phosphate + H(+). Its function is as follows. ATP-dependent RNA helicase which is a subunit of the eIF4F complex involved in cap recognition and is required for mRNA binding to ribosome. In the current model of translation initiation, eIF4A unwinds RNA secondary structures in the 5'-UTR of mRNAs which is necessary to allow efficient binding of the small ribosomal subunit, and subsequent scanning for the initiator codon. The polypeptide is Probable eukaryotic initiation factor 4A (Leishmania braziliensis).